The chain runs to 143 residues: 18 kDa heat shock protein (143 aa).

The sHSP domain maps to Thr23–Gly135.

The protein belongs to the small heat shock protein (HSP20) family.

The chain is 18 kDa heat shock protein (hsp18) from Streptomyces albus G.